The following is a 422-amino-acid chain: Serine--tRNA ligase (422 aa).

Residue 229-231 (TAE) coordinates L-serine. Residue 260–262 (RKE) participates in ATP binding. Position 283 (Glu-283) interacts with L-serine. Residue 347 to 350 (EISS) coordinates ATP. Ser-383 contacts L-serine.

The protein belongs to the class-II aminoacyl-tRNA synthetase family. Type-1 seryl-tRNA synthetase subfamily. In terms of assembly, homodimer. The tRNA molecule binds across the dimer.

It localises to the cytoplasm. It catalyses the reaction tRNA(Ser) + L-serine + ATP = L-seryl-tRNA(Ser) + AMP + diphosphate + H(+). The catalysed reaction is tRNA(Sec) + L-serine + ATP = L-seryl-tRNA(Sec) + AMP + diphosphate + H(+). Its pathway is aminoacyl-tRNA biosynthesis; selenocysteinyl-tRNA(Sec) biosynthesis; L-seryl-tRNA(Sec) from L-serine and tRNA(Sec): step 1/1. Catalyzes the attachment of serine to tRNA(Ser). Is also able to aminoacylate tRNA(Sec) with serine, to form the misacylated tRNA L-seryl-tRNA(Sec), which will be further converted into selenocysteinyl-tRNA(Sec). The polypeptide is Serine--tRNA ligase (Natranaerobius thermophilus (strain ATCC BAA-1301 / DSM 18059 / JW/NM-WN-LF)).